The following is an 80-amino-acid chain: Exodeoxyribonuclease 7 small subunit (80 aa).

The protein belongs to the XseB family. In terms of assembly, heterooligomer composed of large and small subunits.

The protein localises to the cytoplasm. It carries out the reaction Exonucleolytic cleavage in either 5'- to 3'- or 3'- to 5'-direction to yield nucleoside 5'-phosphates.. In terms of biological role, bidirectionally degrades single-stranded DNA into large acid-insoluble oligonucleotides, which are then degraded further into small acid-soluble oligonucleotides. This is Exodeoxyribonuclease 7 small subunit from Lactobacillus helveticus (strain DPC 4571).